Reading from the N-terminus, the 215-residue chain is Large ribosomal subunit protein bL25 (215 aa).

Positions 192 to 203 (EEATEEEEEAAE) are enriched in acidic residues. The disordered stretch occupies residues 192-215 (EEATEEEEEAAEPEVIKRKEEEEE). Over residues 205 to 215 (EVIKRKEEEEE) the composition is skewed to basic and acidic residues.

Belongs to the bacterial ribosomal protein bL25 family. CTC subfamily. As to quaternary structure, part of the 50S ribosomal subunit; part of the 5S rRNA/L5/L18/L25 subcomplex. Contacts the 5S rRNA. Binds to the 5S rRNA independently of L5 and L18.

Its function is as follows. This is one of the proteins that binds to the 5S RNA in the ribosome where it forms part of the central protuberance. The protein is Large ribosomal subunit protein bL25 of Thermotoga sp. (strain RQ2).